Here is a 193-residue protein sequence, read N- to C-terminus: Holliday junction branch migration complex subunit RuvA (193 aa).

Positions 1–64 are domain I; sequence MIGRIAGTLL…EDAHLLFGFA (64 aa). The segment at 65–144 is domain II; the sequence is TATERNTFRE…DLGHAPGATP (80 aa). Positions 145–151 are flexible linker; sequence LADSAVD. Residues 151–193 form a domain III region; it reads DILNALLALGYSEKEAAQAIKQVPAGTGVSDGIKLALKALSKG.

This sequence belongs to the RuvA family. In terms of assembly, homotetramer. Forms an RuvA(8)-RuvB(12)-Holliday junction (HJ) complex. HJ DNA is sandwiched between 2 RuvA tetramers; dsDNA enters through RuvA and exits via RuvB. An RuvB hexamer assembles on each DNA strand where it exits the tetramer. Each RuvB hexamer is contacted by two RuvA subunits (via domain III) on 2 adjacent RuvB subunits; this complex drives branch migration. In the full resolvosome a probable DNA-RuvA(4)-RuvB(12)-RuvC(2) complex forms which resolves the HJ.

Its subcellular location is the cytoplasm. Its function is as follows. The RuvA-RuvB-RuvC complex processes Holliday junction (HJ) DNA during genetic recombination and DNA repair, while the RuvA-RuvB complex plays an important role in the rescue of blocked DNA replication forks via replication fork reversal (RFR). RuvA specifically binds to HJ cruciform DNA, conferring on it an open structure. The RuvB hexamer acts as an ATP-dependent pump, pulling dsDNA into and through the RuvAB complex. HJ branch migration allows RuvC to scan DNA until it finds its consensus sequence, where it cleaves and resolves the cruciform DNA. This chain is Holliday junction branch migration complex subunit RuvA, found in Cupriavidus metallidurans (strain ATCC 43123 / DSM 2839 / NBRC 102507 / CH34) (Ralstonia metallidurans).